A 355-amino-acid polypeptide reads, in one-letter code: Phospho-N-acetylmuramoyl-pentapeptide-transferase (355 aa).

The next 10 helical transmembrane spans lie at 14 to 34 (PTGT…VVFF), 40 to 60 (LLIP…QVVP), 84 to 104 (GTPT…ALIW), 107 to 127 (FTPN…IGWL), 147 to 167 (LILQ…NQVS), 176 to 196 (LVIP…VAES), 205 to 225 (VDGL…IIIA), 227 to 247 (SHPD…GFIF), 268 to 290 (ALAA…GLFF), and 334 to 354 (TKIV…AIWS).

This sequence belongs to the glycosyltransferase 4 family. MraY subfamily. The cofactor is Mg(2+).

Its subcellular location is the cell inner membrane. The enzyme catalyses UDP-N-acetyl-alpha-D-muramoyl-L-alanyl-gamma-D-glutamyl-meso-2,6-diaminopimeloyl-D-alanyl-D-alanine + di-trans,octa-cis-undecaprenyl phosphate = di-trans,octa-cis-undecaprenyl diphospho-N-acetyl-alpha-D-muramoyl-L-alanyl-D-glutamyl-meso-2,6-diaminopimeloyl-D-alanyl-D-alanine + UMP. Its pathway is cell wall biogenesis; peptidoglycan biosynthesis. In terms of biological role, catalyzes the initial step of the lipid cycle reactions in the biosynthesis of the cell wall peptidoglycan: transfers peptidoglycan precursor phospho-MurNAc-pentapeptide from UDP-MurNAc-pentapeptide onto the lipid carrier undecaprenyl phosphate, yielding undecaprenyl-pyrophosphoryl-MurNAc-pentapeptide, known as lipid I. The protein is Phospho-N-acetylmuramoyl-pentapeptide-transferase of Microcystis aeruginosa (strain NIES-843 / IAM M-2473).